A 77-amino-acid polypeptide reads, in one-letter code: Putative defensin-like protein 30 (77 aa).

The signal sequence occupies residues 1-26 (MASSSKCAFLVFLCMIVLLAPSEVHA). Intrachain disulfides connect Cys-43–Cys-63, Cys-49–Cys-72, and Cys-53–Cys-74.

It belongs to the DEFL family.

The protein localises to the secreted. The protein is Putative defensin-like protein 30 of Arabidopsis thaliana (Mouse-ear cress).